Here is a 233-residue protein sequence, read N- to C-terminus: 7-cyano-7-deazaguanine synthase (233 aa).

13–23 is a binding site for ATP; that stretch reads LSGGLDSTTCL. Positions 197, 206, 209, and 212 each coordinate Zn(2+).

It belongs to the QueC family. Zn(2+) is required as a cofactor.

It catalyses the reaction 7-carboxy-7-deazaguanine + NH4(+) + ATP = 7-cyano-7-deazaguanine + ADP + phosphate + H2O + H(+). It functions in the pathway purine metabolism; 7-cyano-7-deazaguanine biosynthesis. Catalyzes the ATP-dependent conversion of 7-carboxy-7-deazaguanine (CDG) to 7-cyano-7-deazaguanine (preQ(0)). This Anaeromyxobacter sp. (strain Fw109-5) protein is 7-cyano-7-deazaguanine synthase.